Reading from the N-terminus, the 193-residue chain is Holliday junction branch migration complex subunit RuvA (193 aa).

The tract at residues 1-63 (MIHHLKGQLI…EDSHTLYGFA (63 aa)) is domain I. Positions 64–142 (EKSEREIFRL…KVLGDDEVFV (79 aa)) are domain II. Residues 143 to 145 (SQS) form a flexible linker region. The interval 145-193 (SNTNKEEALSALEILGYNRRQAGKVVEKILKEDPESTVESIIKMALKKL) is domain III.

The protein belongs to the RuvA family. Homotetramer. Forms an RuvA(8)-RuvB(12)-Holliday junction (HJ) complex. HJ DNA is sandwiched between 2 RuvA tetramers; dsDNA enters through RuvA and exits via RuvB. An RuvB hexamer assembles on each DNA strand where it exits the tetramer. Each RuvB hexamer is contacted by two RuvA subunits (via domain III) on 2 adjacent RuvB subunits; this complex drives branch migration. In the full resolvosome a probable DNA-RuvA(4)-RuvB(12)-RuvC(2) complex forms which resolves the HJ.

The protein resides in the cytoplasm. Functionally, the RuvA-RuvB-RuvC complex processes Holliday junction (HJ) DNA during genetic recombination and DNA repair, while the RuvA-RuvB complex plays an important role in the rescue of blocked DNA replication forks via replication fork reversal (RFR). RuvA specifically binds to HJ cruciform DNA, conferring on it an open structure. The RuvB hexamer acts as an ATP-dependent pump, pulling dsDNA into and through the RuvAB complex. HJ branch migration allows RuvC to scan DNA until it finds its consensus sequence, where it cleaves and resolves the cruciform DNA. The sequence is that of Holliday junction branch migration complex subunit RuvA from Christiangramia forsetii (strain DSM 17595 / CGMCC 1.15422 / KT0803) (Gramella forsetii).